Reading from the N-terminus, the 277-residue chain is Multiple sugar-binding transport system permease protein MsmG (277 aa).

6 helical membrane passes run 13–33 (YVLLTVGGILILIPLMVTVFS), 74–94 (VITVLSVLVVMLFIPAAAYSI), 110–130 (LLILGIFVPFQVIMIPITVMM), 141–161 (LIILYLTYAIPQTLFLYVGYI), 198–218 (TTLIINALWFWNDFMLPLLIL), and 243–263 (GPSFASYIVGIITITIVYLIF). Residues 69–263 (FWNSTVITVL…ITITIVYLIF (195 aa)) enclose the ABC transmembrane type-1 domain.

Belongs to the binding-protein-dependent transport system permease family. MalFG subfamily.

Its subcellular location is the cell membrane. Functionally, involved in a binding protein-dependent transport system responsible for the uptake of melibiose, raffinose and isomaltotriose. The sequence is that of Multiple sugar-binding transport system permease protein MsmG (msmG) from Streptococcus mutans serotype c (strain ATCC 700610 / UA159).